We begin with the raw amino-acid sequence, 434 residues long: Ribonuclease T2-like (434 aa).

The signal sequence occupies residues Met1 to Gly18. 5 disulfides stabilise this stretch: Cys27–Cys46, Cys35–Cys94, Cys45–Cys171, Cys102–Cys163, and Cys241–Cys277. Asn37 and Asn70 each carry an N-linked (GlcNAc...) asparagine glycan. The active site involves His87. N-linked (GlcNAc...) asparagine glycans are attached at residues Asn103 and Asn123. Catalysis depends on residues Glu156 and His160.

The protein belongs to the RNase T2 family. N-glycosylated.

Its subcellular location is the vacuole lumen. It localises to the cytoplasm. The catalysed reaction is a ribonucleotidyl-ribonucleotide-RNA + H2O = a 3'-end 3'-phospho-ribonucleotide-RNA + a 5'-end dephospho-ribonucleoside-RNA + H(+). In terms of biological role, rnase which modulates cell survival under stress conditions. Released from the vacuole to the cytoplasm during stress to promote tRNA and rRNA cleavage and to activate separately a downstream pathway that promotes cell death. Involved in cell size, vacuolar morphology and growth at high temperatures and high salt concentration. The protein is Ribonuclease T2-like (RNY1) of Saccharomyces cerevisiae (strain ATCC 204508 / S288c) (Baker's yeast).